A 460-amino-acid chain; its full sequence is Crocetin glucosyltransferase 2 (460 aa).

The active-site Proton acceptor is the H19. H19 lines the an anthocyanidin pocket. The UDP-alpha-D-glucose site is built by T133, Q333, H348, W351, N352, S353, E356, D372, and Q373.

This sequence belongs to the UDP-glycosyltransferase family. Mainly expressed in fully developed stigmas.

The enzyme catalyses crocetin + UDP-alpha-D-glucose = beta-D-glucosyl crocetin + UDP. It carries out the reaction beta-D-glucosyl crocetin + UDP-alpha-D-glucose = bis(beta-D-glucosyl) crocetin + UDP. The catalysed reaction is beta-D-gentiobiosyl crocetin + UDP-alpha-D-glucose = beta-D-gentiobiosyl beta-D-glucosyl crocetin + UDP. Crocetin glucosyltransferase involved in the synthesis of crocin, one of the apocarotenoids responsible for the color and bitter taste of saffron. The polypeptide is Crocetin glucosyltransferase 2 (GLT2) (Crocus sativus (Saffron)).